We begin with the raw amino-acid sequence, 228 residues long: Ferric nitrobindin-like protein (228 aa).

The tract at residues 1 to 21 (MTSDEVRDGAGSPADSSKGNK) is disordered. The short motif at 75–81 (GVWRGEG) is the GXWXGXG element.

Belongs to the nitrobindin family.

This Mycobacterium leprae (strain TN) protein is Ferric nitrobindin-like protein.